We begin with the raw amino-acid sequence, 219 residues long: Inner membrane protein YghB (219 aa).

Topologically, residues 1–17 (MAVIQDIIAALWQHDFA) are cytoplasmic. The chain crosses the membrane as a helical span at residues 18–38 (ALANPHVVSVVYFVMFATLFL). At 39-67 (ENGLLPASFLPGDSLLLLAGALIAQDVMH) the chain is on the periplasmic side. The helical transmembrane segment at 68–88 (FLPTIGILTAAASLGCWLSYI) threads the bilayer. The Cytoplasmic portion of the chain corresponds to 89–160 (QGRWLGNTRT…RRFQFFNWLS (72 aa)). Residues 161–181 (GLLWVTVVTSFGYALSMIPFV) form a helical membrane-spanning segment. Residues 182–191 (KRHEDQVMTF) lie on the Periplasmic side of the membrane. A helical membrane pass occupies residues 192–212 (LMILPVALLVAGLLGTLVVVI). Topologically, residues 213-219 (KKKYCNA) are cytoplasmic.

It belongs to the DedA family.

The protein resides in the cell inner membrane. The chain is Inner membrane protein YghB (yghB) from Salmonella typhimurium (strain LT2 / SGSC1412 / ATCC 700720).